The following is a 437-amino-acid chain: Dolichyl-diphosphooligosaccharide--protein glycosyltransferase 48 kDa subunit (437 aa).

A signal peptide spans 1–24 (MVNLSRSVALISVFLLPLLSFSFS). The Lumenal portion of the chain corresponds to 25-414 (VDNPTDRRVL…YERFIPTAYP (390 aa)). A helical membrane pass occupies residues 415-435 (YYGACFTTMAGFFVFSFVYLY). The Cytoplasmic segment spans residues 436–437 (HK).

It belongs to the DDOST 48 kDa subunit family. In terms of assembly, component of the oligosaccharyltransferase (OST) complex.

The protein resides in the endoplasmic reticulum membrane. Its pathway is protein modification; protein glycosylation. Its function is as follows. Subunit of the oligosaccharyl transferase (OST) complex that catalyzes the initial transfer of a defined glycan (Glc(3)Man(9)GlcNAc(2) in eukaryotes) from the lipid carrier dolichol-pyrophosphate to an asparagine residue within an Asn-X-Ser/Thr consensus motif in nascent polypeptide chains, the first step in protein N-glycosylation. N-glycosylation occurs cotranslationally and the complex associates with the Sec61 complex at the channel-forming translocon complex that mediates protein translocation across the endoplasmic reticulum (ER). All subunits are required for a maximal enzyme activity. The polypeptide is Dolichyl-diphosphooligosaccharide--protein glycosyltransferase 48 kDa subunit (OST48) (Arabidopsis thaliana (Mouse-ear cress)).